The following is a 154-amino-acid chain: Protein FAM162A (154 aa).

The required for proapoptotic activity stretch occupies residues 76-102; it reads RFKKEDEIPETVSLEMLDAAKNKMRVK. A helical membrane pass occupies residues 103–120; that stretch reads ISYLMIALTVVGCIFMVI.

Belongs to the UPF0389 family. As to quaternary structure, interacts with HSP90AB1; HSP90AB1 is essential for FAM162A mitochondrial localization and pro-apoptotic activity. Interacts with VDAC2; the interaction is probably involved in inducing mitochondrial permeability transition.

Its subcellular location is the mitochondrion membrane. In terms of biological role, proposed to be involved in regulation of apoptosis; the exact mechanism may differ between cell types/tissues. May be involved in hypoxia-induced cell death of transformed cells implicating cytochrome C release and caspase activation (such as CASP9) and inducing mitochondrial permeability transition. May be involved in hypoxia-induced cell death of neuronal cells probably by promoting release of AIFM1 from mitochondria to cytoplasm and its translocation to the nucleus; however, the involvement of caspases has been reported conflictingly. This Homo sapiens (Human) protein is Protein FAM162A (FAM162A).